Here is a 105-residue protein sequence, read N- to C-terminus: Cell division protein FtsB (105 aa).

At 1–3 the chain is on the cytoplasmic side; that stretch reads MKP. The chain crosses the membrane as a helical span at residues 4 to 21; it reads FVLVLFALLALLQYRLWF. Residues 22–105 lie on the Periplasmic side of the membrane; the sequence is GENSLTEYFT…RSSEQSQDNQ (84 aa). A coiled-coil region spans residues 38–75; that stretch reads HQQSGNAELLERNEVLKEEIQDLKSGTEALEERARNEL.

Belongs to the FtsB family. As to quaternary structure, part of a complex composed of FtsB, FtsL and FtsQ.

The protein resides in the cell inner membrane. In terms of biological role, essential cell division protein. May link together the upstream cell division proteins, which are predominantly cytoplasmic, with the downstream cell division proteins, which are predominantly periplasmic. This chain is Cell division protein FtsB, found in Shewanella amazonensis (strain ATCC BAA-1098 / SB2B).